A 477-amino-acid chain; its full sequence is MEWETVIGLEVHAQLATKSKIFSGASTAYGAAPNSQACAIDLGLPGVLPVLNREAVRMAVKFGLAIGAEISPRSVFARKNYFYPDLPKGYQISQYELPVVGLGKLEIELEDGETKVIGITRAHLEEDAGKSLHEDFHGMSGIDLNRAGTPLLEIVSEPDMRSAKEAVAYLKKLHALVRYLEICDGNMQEGSFRCDANVSVRRKGTEKFGTRAEIKNINSFRFVERAINYEVERQIDILEGGGAVVQETRLYDPDKGETRSMRSKEEANDYRYFPDPDLLPLEIDASFIEGVRGTLPELPDEKKHRFMTHYGLSAYDAGVLTASREMGDYYEAVVKACGGHAKLAANWVMGELSAALNKDNREITESPVSAAALGQMLERIEDNTISGKIAKDVFEAMWNGEGSADAVIEKKGLKQITDTGAIEAIIDKVMADNPGQLEQYRSGKDKLFGFFVGQVMKATGGKANPGQVNDLLKKKLQ.

It belongs to the GatB/GatE family. GatB subfamily. Heterotrimer of A, B and C subunits.

It catalyses the reaction L-glutamyl-tRNA(Gln) + L-glutamine + ATP + H2O = L-glutaminyl-tRNA(Gln) + L-glutamate + ADP + phosphate + H(+). The enzyme catalyses L-aspartyl-tRNA(Asn) + L-glutamine + ATP + H2O = L-asparaginyl-tRNA(Asn) + L-glutamate + ADP + phosphate + 2 H(+). In terms of biological role, allows the formation of correctly charged Asn-tRNA(Asn) or Gln-tRNA(Gln) through the transamidation of misacylated Asp-tRNA(Asn) or Glu-tRNA(Gln) in organisms which lack either or both of asparaginyl-tRNA or glutaminyl-tRNA synthetases. The reaction takes place in the presence of glutamine and ATP through an activated phospho-Asp-tRNA(Asn) or phospho-Glu-tRNA(Gln). The polypeptide is Aspartyl/glutamyl-tRNA(Asn/Gln) amidotransferase subunit B (Thioalkalivibrio sulfidiphilus (strain HL-EbGR7)).